The primary structure comprises 498 residues: ATP synthase subunit beta, chloroplastic (498 aa).

At Thr6 the chain carries Phosphothreonine. Ser13 carries the phosphoserine modification. Gly172 to Thr179 lines the ATP pocket.

This sequence belongs to the ATPase alpha/beta chains family. F-type ATPases have 2 components, CF(1) - the catalytic core - and CF(0) - the membrane proton channel. CF(1) has five subunits: alpha(3), beta(3), gamma(1), delta(1), epsilon(1). CF(0) has four main subunits: a(1), b(1), b'(1) and c(9-12).

It is found in the plastid. The protein resides in the chloroplast thylakoid membrane. It carries out the reaction ATP + H2O + 4 H(+)(in) = ADP + phosphate + 5 H(+)(out). Its function is as follows. Produces ATP from ADP in the presence of a proton gradient across the membrane. The catalytic sites are hosted primarily by the beta subunits. The sequence is that of ATP synthase subunit beta, chloroplastic from Nasturtium officinale (Watercress).